We begin with the raw amino-acid sequence, 141 residues long: Nucleoside diphosphate kinase (141 aa).

K11, F59, R87, T93, R104, and N114 together coordinate ATP. The active-site Pros-phosphohistidine intermediate is the H117.

Belongs to the NDK family. As to quaternary structure, homotetramer. It depends on Mg(2+) as a cofactor.

Its subcellular location is the cytoplasm. It carries out the reaction a 2'-deoxyribonucleoside 5'-diphosphate + ATP = a 2'-deoxyribonucleoside 5'-triphosphate + ADP. The enzyme catalyses a ribonucleoside 5'-diphosphate + ATP = a ribonucleoside 5'-triphosphate + ADP. Major role in the synthesis of nucleoside triphosphates other than ATP. The ATP gamma phosphate is transferred to the NDP beta phosphate via a ping-pong mechanism, using a phosphorylated active-site intermediate. This Vibrio parahaemolyticus serotype O3:K6 (strain RIMD 2210633) protein is Nucleoside diphosphate kinase.